The sequence spans 327 residues: Gibberellin 2-beta-dioxygenase 1 (327 aa).

The region spanning 171 to 276 (QSDCLFRVNH…RLSMIYFCGP (106 aa)) is the Fe2OG dioxygenase domain. Residues His-200, Asp-202, and His-257 each coordinate Fe cation. Residue Arg-267 is part of the active site.

The protein belongs to the iron/ascorbate-dependent oxidoreductase family. GA2OX subfamily. Fe cation is required as a cofactor. Predominantly expressed in roots, flowers, young fruits and seeds.

The catalysed reaction is gibberellin A1 + 2-oxoglutarate + O2 = gibberellin A8 + succinate + CO2. It functions in the pathway plant hormone biosynthesis; gibberellin biosynthesis. Its function is as follows. Catalyzes the 2-beta-hydroxylation of several biologically active gibberellins, leading to the homeostatic regulation of their endogenous level. Catabolism of gibberellins (GAs) plays a central role in plant development. Converts GA9/GA20 to GA51/GA29 and GA4/GA1 to GA34/GA8. The protein is Gibberellin 2-beta-dioxygenase 1 (GA2OX1) of Pisum sativum (Garden pea).